The following is a 227-amino-acid chain: Ubiquitin-conjugating enzyme E2 6 (227 aa).

The Cytoplasmic portion of the chain corresponds to 1 to 206 (MASKGAYKRL…NSKQSWVKSR (206 aa)). The UBC core domain maps to 5–163 (GAYKRLMKEY…FPELIDKNRE (159 aa)). Catalysis depends on Cys-87, which acts as the Glycyl thioester intermediate. The helical transmembrane segment at 207 to 225 (WSIAVLVFFALALARFFGA) threads the bilayer.

The protein belongs to the ubiquitin-conjugating enzyme family.

It is found in the endoplasmic reticulum membrane. It catalyses the reaction S-ubiquitinyl-[E1 ubiquitin-activating enzyme]-L-cysteine + [E2 ubiquitin-conjugating enzyme]-L-cysteine = [E1 ubiquitin-activating enzyme]-L-cysteine + S-ubiquitinyl-[E2 ubiquitin-conjugating enzyme]-L-cysteine.. Its pathway is protein modification; protein ubiquitination. Its function is as follows. Catalyzes the covalent attachment of ubiquitin to other proteins. Functions in degradation of misfolded or regulated proteins localized in the endoplasmic reticulum (ER) lumen or membrane via the ubiquitin-proteasome system. Cognate E2 conjugating enzyme for the doa10 ubiquitin ligase complex, which is part of the ERAD-C pathway responsible for the rapid degradation of membrane proteins with misfolded cytoplasmic domains. This chain is Ubiquitin-conjugating enzyme E2 6 (ubc6), found in Schizosaccharomyces pombe (strain 972 / ATCC 24843) (Fission yeast).